We begin with the raw amino-acid sequence, 186 residues long: ATP-dependent protease subunit HslV (186 aa).

Residue T14 is part of the active site. Na(+)-binding residues include A168, C171, and T174.

The protein belongs to the peptidase T1B family. HslV subfamily. As to quaternary structure, a double ring-shaped homohexamer of HslV is capped on each side by a ring-shaped HslU homohexamer. The assembly of the HslU/HslV complex is dependent on binding of ATP.

The protein localises to the cytoplasm. It catalyses the reaction ATP-dependent cleavage of peptide bonds with broad specificity.. With respect to regulation, allosterically activated by HslU binding. Functionally, protease subunit of a proteasome-like degradation complex believed to be a general protein degrading machinery. In Bradyrhizobium sp. (strain BTAi1 / ATCC BAA-1182), this protein is ATP-dependent protease subunit HslV.